The following is a 1043-amino-acid chain: Protein translocase subunit SecA (1043 aa).

Residues Q143, 161–165 (GEGKT), and D665 each bind ATP. The segment covering 980 to 1005 (ATAAPAAETTTTAKAADAARQQPPAA) has biased composition (low complexity). The disordered stretch occupies residues 980–1043 (ATAAPAAETT…KYKHCHGRNA (64 aa)). Residues 1008–1022 (EEQKRQPVHVEKTPG) show a composition bias toward basic and acidic residues. C1027, C1029, C1038, and H1039 together coordinate Zn(2+). The segment covering 1033–1043 (KKYKHCHGRNA) has biased composition (basic residues).

It belongs to the SecA family. As to quaternary structure, monomer and homodimer. Part of the essential Sec protein translocation apparatus which comprises SecA, SecYEG and auxiliary proteins SecDF. Other proteins may also be involved. Requires Zn(2+) as cofactor.

The protein localises to the cell inner membrane. It is found in the cytoplasm. It catalyses the reaction ATP + H2O + cellular proteinSide 1 = ADP + phosphate + cellular proteinSide 2.. Part of the Sec protein translocase complex. Interacts with the SecYEG preprotein conducting channel. Has a central role in coupling the hydrolysis of ATP to the transfer of proteins into and across the cell membrane, serving as an ATP-driven molecular motor driving the stepwise translocation of polypeptide chains across the membrane. The protein is Protein translocase subunit SecA of Chloroherpeton thalassium (strain ATCC 35110 / GB-78).